The sequence spans 373 residues: Chaperone protein DnaJ (373 aa).

The J domain maps to 5–70; that stretch reads DYYEVLGLQK…EKKSNYDQFG (66 aa). Residues 132-214 form a CR-type zinc finger; the sequence is GVEKEITVNR…CRGNGNVRKT (83 aa). Positions 145, 148, 162, 165, 188, 191, 202, and 205 each coordinate Zn(2+). CXXCXGXG motif repeat units lie at residues 145 to 152, 162 to 169, 188 to 195, and 202 to 209; these read CEHCNGSG, CPTCSGTG, CDRCSGTG, and CTHCRGNG.

Belongs to the DnaJ family. Homodimer. Requires Zn(2+) as cofactor.

It is found in the cytoplasm. Participates actively in the response to hyperosmotic and heat shock by preventing the aggregation of stress-denatured proteins and by disaggregating proteins, also in an autonomous, DnaK-independent fashion. Unfolded proteins bind initially to DnaJ; upon interaction with the DnaJ-bound protein, DnaK hydrolyzes its bound ATP, resulting in the formation of a stable complex. GrpE releases ADP from DnaK; ATP binding to DnaK triggers the release of the substrate protein, thus completing the reaction cycle. Several rounds of ATP-dependent interactions between DnaJ, DnaK and GrpE are required for fully efficient folding. Also involved, together with DnaK and GrpE, in the DNA replication of plasmids through activation of initiation proteins. The polypeptide is Chaperone protein DnaJ (Clostridium botulinum (strain Eklund 17B / Type B)).